The sequence spans 229 residues: MEISAINLSLSVAVSSMLWSLPLAIFVAWLLARKNFYGKSLITGVIHLPLVLPPVVIGYLLLVAMGRNGFIGKYLYQWFGLSFGFSWKGAVLSSAVVAFPLVVRAIRLSLENIDIKLEQAAQTLGASAWRVFFTITLPLSLPGVLAGLVLGFARSLGEFGATITFVSNIAGETQTIPLAMYSFIQTPGAEEQTARLCLFAIILSLISLLLSEWLSKRMQKKLGQGNVAD.

Residues 6–214 enclose the ABC transmembrane type-1 domain; the sequence is INLSLSVAVS…LISLLLSEWL (209 aa). 5 consecutive transmembrane segments (helical) span residues 12–32, 45–65, 83–103, 132–152, and 196–216; these read VAVS…WLLA, VIHL…LVAM, FGFS…PLVV, FFTI…VLGF, and LCLF…WLSK.

It belongs to the binding-protein-dependent transport system permease family. CysTW subfamily.

The protein resides in the cell inner membrane. In terms of biological role, part of the binding-protein-dependent transport system for molybdenum; probably responsible for the translocation of the substrate across the membrane. This is Molybdenum transport system permease protein ModB (modB) from Haemophilus influenzae (strain ATCC 51907 / DSM 11121 / KW20 / Rd).